The sequence spans 207 residues: Urease accessory protein UreG (207 aa).

16 to 23 (GPVGSGKT) serves as a coordination point for GTP.

Belongs to the SIMIBI class G3E GTPase family. UreG subfamily. As to quaternary structure, homodimer. UreD, UreF and UreG form a complex that acts as a GTP-hydrolysis-dependent molecular chaperone, activating the urease apoprotein by helping to assemble the nickel containing metallocenter of UreC. The UreE protein probably delivers the nickel.

It is found in the cytoplasm. Facilitates the functional incorporation of the urease nickel metallocenter. This process requires GTP hydrolysis, probably effectuated by UreG. This is Urease accessory protein UreG from Cupriavidus metallidurans (strain ATCC 43123 / DSM 2839 / NBRC 102507 / CH34) (Ralstonia metallidurans).